A 1243-amino-acid polypeptide reads, in one-letter code: Serine/threonine-protein kinase WNK4 (1243 aa).

Residues Met1 to Glu17 show a composition bias toward polar residues. The tract at residues Met1–Val142 is disordered. Low complexity predominate over residues Val65–Ala77. Positions Ser78 to Lys103 are enriched in pro residues. Residue Ser97 is modified to Phosphoserine. The segment covering Ala118 to Leu127 has biased composition (basic and acidic residues). Residues Lys157 and Lys175 each participate in a glycyl lysine isopeptide (Lys-Gly) (interchain with G-Cter in ubiquitin) cross-link. Positions Leu174 to Phe432 constitute a Protein kinase domain. Ser184 contributes to the ATP binding site. Residues Lys186, Lys226, and Lys241 each participate in a glycyl lysine isopeptide (Lys-Gly) (interchain with G-Cter in ubiquitin) cross-link. ATP is bound by residues Thr254–Met257 and Lys304. Catalysis depends on Asp321, which acts as the Proton acceptor. A Glycyl lysine isopeptide (Lys-Gly) (interchain with G-Cter in ubiquitin) cross-link involves residue Lys328. Ser331 and Ser335 each carry phosphoserine; by autocatalysis. Glycyl lysine isopeptide (Lys-Gly) (interchain with G-Cter in ubiquitin) cross-links involve residues Lys387, Lys393, Lys450, and Lys454. A disordered region spans residues Lys526–Asp564. Residues Pro534 to Pro556 are compositionally biased toward pro residues. An interaction with KLHL3 region spans residues Glu557–Gln567. Residue Ser575 is modified to Phosphoserine. The segment covering Ser630–Ser641 has biased composition (low complexity). Disordered regions lie at residues Ser630–Asp683, Asp751–Glu871, and Ser943–Trp1110. A compositionally biased stretch (basic residues) spans Pro663–Leu676. Residues Glu767 to Asp780 show a composition bias toward pro residues. Low complexity predominate over residues Trp797–Ser812. Residues Pro822–Phe843 are compositionally biased toward pro residues. Composition is skewed to low complexity over residues Ser844 to Pro854, Pro862 to Glu871, and Ser943 to Ser952. Residues Pro953–Ala970 are compositionally biased toward pro residues. Lys1010 participates in a covalent cross-link: Glycyl lysine isopeptide (Lys-Gly) (interchain with G-Cter in ubiquitin). Residues Arg1016 to Val1019 carry the RFXV motif motif. Ser1035 bears the Phosphoserine mark. Basic and acidic residues predominate over residues Glu1065 to Ala1077. Glycyl lysine isopeptide (Lys-Gly) (interchain with G-Cter in ubiquitin) cross-links involve residues Lys1144, Lys1157, and Lys1158. The disordered stretch occupies residues Arg1166–Met1243. Polar residues-rich tracts occupy residues Ser1193–Arg1204 and Asn1216–Gln1228. Ser1217 bears the Phosphoserine mark.

This sequence belongs to the protein kinase superfamily. Ser/Thr protein kinase family. WNK subfamily. As to quaternary structure, interacts with the C-terminal region of KCNJ1. Requires Mg(2+) as cofactor. Autophosphorylated at Ser-331 and Ser-335, promoting its activation. Phosphorylated by WNK1 and WNK3. Phosphorylated at Ser-575 in a MAP3K15/ASK3-dependent process in response to osmotic stress or hypotonic low-chloride stimulation. In terms of processing, ubiquitinated by the BCR(KLHL3) complex, leading to its degradation. Also ubiquitinated by the BCR(KLHL2) complex. As to expression, expressed in kidney, colon and skin.

It localises to the cell junction. The protein localises to the tight junction. The catalysed reaction is L-seryl-[protein] + ATP = O-phospho-L-seryl-[protein] + ADP + H(+). It catalyses the reaction L-threonyl-[protein] + ATP = O-phospho-L-threonyl-[protein] + ADP + H(+). Its activity is regulated as follows. Activation requires autophosphorylation of Ser-331 and Ser-335. Autophosphorylation and subsequent activation is inhibited by increases in intracellular ionic strength: Cl(-) potently inhibits WNK4 kinase activity via direct binding. Also inhibited by K(+) ions. Serine/threonine-protein kinase component of the WNK4-SPAK/OSR1 kinase cascade, which acts as a key regulator of ion transport in the distal nephron and blood pressure. The WNK4-SPAK/OSR1 kinase cascade is composed of WNK4, which mediates phosphorylation and activation of downstream kinases OXSR1/OSR1 and STK39/SPAK. Following activation, OXSR1/OSR1 and STK39/SPAK catalyze phosphorylation of ion cotransporters, such as SLC12A1/NKCC2, SLC12A2/NKCC1, SLC12A3/NCC, SLC12A5/KCC2 or SLC12A6/KCC3, regulating their activity. Acts as a molecular switch that regulates the balance between renal salt reabsorption and K(+) secretion by modulating the activities of renal transporters and channels, including the Na-Cl cotransporter SLC12A3/NCC and the K(+) channel, KCNJ1/ROMK. Regulates NaCl reabsorption in the distal nephron by activating the thiazide-sensitive Na-Cl cotransporter SLC12A3/NCC in distal convoluted tubule cells of kidney: activates SLC12A3/NCC in a OXSR1/OSR1- and STK39/SPAK-dependent process. Also acts as a scaffold protein independently of its protein kinase activity: negatively regulates cell membrane localization of various transporters and channels (CFTR, KCNJ1/ROMK, SLC4A4, SLC26A9 and TRPV4) by clathrin-dependent endocytosis. Also inhibits the activity of the epithelial Na(+) channel (ENaC) SCNN1A, SCNN1B, SCNN1D in a inase-independent mechanism. May also phosphorylate NEDD4L. This is Serine/threonine-protein kinase WNK4 from Homo sapiens (Human).